The primary structure comprises 288 residues: Ubiquitin thioesterase otubain-like (288 aa).

An OTU domain is found at 76-275; the sequence is SHIRFIRGDG…PGHYDLIYKA (200 aa). The active site involves aspartate 84. Cysteine 87 (nucleophile) is an active-site residue. Residue isoleucine 175 participates in substrate binding. Active-site residues include histidine 244 and histidine 268.

The protein belongs to the peptidase C65 family.

It carries out the reaction Thiol-dependent hydrolysis of ester, thioester, amide, peptide and isopeptide bonds formed by the C-terminal Gly of ubiquitin (a 76-residue protein attached to proteins as an intracellular targeting signal).. Functionally, hydrolase that can remove conjugated ubiquitin from proteins and plays an important regulatory role at the level of protein turnover by preventing degradation. Specifically cleaves 'Lys-48'-linked polyubiquitin. In Caenorhabditis briggsae, this protein is Ubiquitin thioesterase otubain-like.